Here is a 33-residue protein sequence, read N- to C-terminus: GFFLNALKNFAKTAGKRLKSLLNHASCKLSGQC.

Cysteine 27 and cysteine 33 are joined by a disulfide.

In terms of tissue distribution, expressed by the skin glands.

Its subcellular location is the secreted. Functionally, antimicrobial peptide active against E.coli (MIC=5 uM), K.pneumoniae (MIC=10 uM), B.cereus (MIC=7 uM) and S.aureus (MIC=12 uM). Has very little hemolytic activity. This is Cyanophlyctin-beta from Euphlyctis cyanophlyctis (Skittering frog).